Here is a 172-residue protein sequence, read N- to C-terminus: Galectin-related protein (172 aa).

At Ala-2 the chain carries N-acetylalanine. Phosphoserine occurs at positions 22 and 25. Residues 39–168 (PFCGHIKGGM…TIKINGDLQI (130 aa)) form the Galectin domain.

In terms of assembly, monomer.

Does not bind lactose, and may not bind carbohydrates. The protein is Galectin-related protein (Lgalsl) of Mus musculus (Mouse).